The chain runs to 261 residues: Prostatic glandular kallikrein-6 (261 aa).

Positions 1–18 (MWLLILFLILSLGWNDAA) are cleaved as a signal peptide. A propeptide spans 19-24 (PPGQSR) (activation peptide). Positions 25–258 (IIGGFNCEKN…FTSWMKKVMK (234 aa)) constitute a Peptidase S1 domain. 5 cysteine pairs are disulfide-bonded: Cys-31/Cys-173, Cys-50/Cys-66, Cys-152/Cys-219, Cys-184/Cys-198, and Cys-209/Cys-234. The active-site Charge relay system is the His-65. N-linked (GlcNAc...) asparagine glycosylation is present at Asn-108. Residue Asp-120 is the Charge relay system of the active site. The Charge relay system role is filled by Ser-213.

It belongs to the peptidase S1 family. Kallikrein subfamily.

The enzyme catalyses Preferential cleavage of Arg-|-Xaa bonds in small molecule substrates. Highly selective action to release kallidin (lysyl-bradykinin) from kininogen involves hydrolysis of Met-|-Xaa or Leu-|-Xaa.. Functionally, glandular kallikreins cleave Met-Lys and Arg-Ser bonds in kininogen to release Lys-bradykinin. This is Prostatic glandular kallikrein-6 (Klk6) from Rattus norvegicus (Rat).